The following is a 569-amino-acid chain: Glutamate--tRNA ligase, chloroplastic/mitochondrial (569 aa).

Residue 59-61 participates in L-glutamate binding; it reads RFA. The short motif at 62-72 is the 'HIGH' region element; the sequence is PSPTGNLHVGG. Residue H69 coordinates ATP. L-glutamate is bound by residues E95, 247–251, and R265; that span reads YNFCV. Residues E268 and 303 to 307 contribute to the ATP site; that span reads KLSKR. Residues 303 to 307 carry the 'KMSKS' region motif; that stretch reads KLSKR.

The protein belongs to the class-I aminoacyl-tRNA synthetase family. Glutamate--tRNA ligase type 1 subfamily.

The protein localises to the plastid. Its subcellular location is the chloroplast. It localises to the mitochondrion. It catalyses the reaction tRNA(Glu) + L-glutamate + ATP = L-glutamyl-tRNA(Glu) + AMP + diphosphate. In terms of biological role, catalyzes the attachment of glutamate to tRNA(Glu) in a two-step reaction: glutamate is first activated by ATP to form Glu-AMP and then transferred to the acceptor end of tRNA(Glu). The polypeptide is Glutamate--tRNA ligase, chloroplastic/mitochondrial (Nicotiana tabacum (Common tobacco)).